The chain runs to 327 residues: Probable pectinesterase A (327 aa).

A signal peptide spans 1-19; the sequence is MHTPYLLGALAALAATAVG. An N-linked (GlcNAc...) asparagine glycan is attached at Asn84. A substrate-binding site is contributed by Gln145. Catalysis depends on Asp168, which acts as the Proton donor. The active-site Nucleophile is the Asp189. Substrate is bound by residues Arg249 and Trp251. The N-linked (GlcNAc...) asparagine glycan is linked to Asn288.

This sequence belongs to the pectinesterase family.

The protein localises to the secreted. The enzyme catalyses [(1-&gt;4)-alpha-D-galacturonosyl methyl ester](n) + n H2O = [(1-&gt;4)-alpha-D-galacturonosyl](n) + n methanol + n H(+). Its pathway is glycan metabolism; pectin degradation; 2-dehydro-3-deoxy-D-gluconate from pectin: step 1/5. Involved in maceration and soft-rotting of plant tissue. This Aspergillus niger (strain ATCC MYA-4892 / CBS 513.88 / FGSC A1513) protein is Probable pectinesterase A (pmeA).